The chain runs to 150 residues: 1,4-dihydroxy-2-naphthoyl-CoA hydrolase (150 aa).

The active site involves Asp22.

Belongs to the 4-hydroxybenzoyl-CoA thioesterase family. DHNA-CoA hydrolase subfamily.

The enzyme catalyses 1,4-dihydroxy-2-naphthoyl-CoA + H2O = 1,4-dihydroxy-2-naphthoate + CoA + H(+). The protein operates within cofactor biosynthesis; phylloquinone biosynthesis. It functions in the pathway quinol/quinone metabolism; 1,4-dihydroxy-2-naphthoate biosynthesis; 1,4-dihydroxy-2-naphthoate from chorismate: step 7/7. Catalyzes the hydrolysis of 1,4-dihydroxy-2-naphthoyl-CoA (DHNA-CoA) to 1,4-dihydroxy-2-naphthoate (DHNA), a reaction involved in phylloquinone (vitamin K1) biosynthesis. The protein is 1,4-dihydroxy-2-naphthoyl-CoA hydrolase of Prochlorococcus marinus (strain NATL1A).